A 502-amino-acid chain; its full sequence is Pyruvate kinase (502 aa).

A substrate-binding site is contributed by R54. Positions 56, 58, 88, and 89 each coordinate K(+). Residue 56 to 59 (NFSH) coordinates ATP. R95 and K184 together coordinate ATP. Mg(2+) is bound at residue E252. Substrate-binding residues include G275, D276, and T308. D276 provides a ligand contact to Mg(2+).

Belongs to the pyruvate kinase family. In terms of assembly, homotetramer. It depends on Mg(2+) as a cofactor. The cofactor is K(+).

The enzyme catalyses pyruvate + ATP = phosphoenolpyruvate + ADP + H(+). It functions in the pathway carbohydrate degradation; glycolysis; pyruvate from D-glyceraldehyde 3-phosphate: step 5/5. Regulated by phosphoenolpyruvate substrate and is allosterically activated by ribose-5-phosphate, AMP and other nucleoside monophosphates but not by fructose-1,6-bisphosphate. In Lactococcus lactis subsp. lactis (strain IL1403) (Streptococcus lactis), this protein is Pyruvate kinase (pyk).